The primary structure comprises 162 residues: MHLADLIETTLNGMGYELVELERAPAGLLRVYIDQPETGIVIEDCEKVSRQLTHVLTVENVDYERLEVSSPGLDRPLKKLADYVRFAGAEARVTLRLPVNGQKNFTGILREPTGEAGAEKVGLEFEGKDGPALLEFTVSDVDKARLVPVIDFKGNQRKGNKQ.

This sequence belongs to the RimP family.

It is found in the cytoplasm. Its function is as follows. Required for maturation of 30S ribosomal subunits. This is Ribosome maturation factor RimP from Cupriavidus pinatubonensis (strain JMP 134 / LMG 1197) (Cupriavidus necator (strain JMP 134)).